Consider the following 110-residue polypeptide: MIKLRLKRFGKKRETSFRLVACNSTSRRDGRPLQELGFYNPRTKETRLDTEALRTRLGQGAQPTDAVRTLLEKGGLLEKKVRPAEVLGKQKQEKERSAKKKDAAASETSE.

Residues 81 to 104 (VRPAEVLGKQKQEKERSAKKKDAA) show a composition bias toward basic and acidic residues. Positions 81–110 (VRPAEVLGKQKQEKERSAKKKDAAASETSE) are disordered.

It belongs to the bacterial ribosomal protein bS16 family.

The chain is Small ribosomal subunit protein bS16 from Prochlorococcus marinus (strain NATL2A).